The sequence spans 293 residues: D-psicose 3-epimerase (293 aa).

Residues Y6 and A107 each coordinate substrate. The active-site Proton donor/acceptor is E150. E150 provides a ligand contact to Mn(2+). Substrate contacts are provided by residues E156 and 183–186; that span reads DTFH. Residues D183 and H209 each contribute to the Mn(2+) site. R215 serves as a coordination point for substrate. The active-site Proton donor/acceptor is E244. A Mn(2+)-binding site is contributed by E244.

It belongs to the hyi family. Homotetramer. It depends on Mn(2+) as a cofactor. Requires Co(2+) as cofactor.

It catalyses the reaction D-allulose = keto-D-fructose. Its function is as follows. Involved in the biosynthesis of D-psicose. Catalyzes the reversible epimerization of D-fructose at the C3 position to yield D-psicose. The enzyme is highly specific for D-psicose and shows very low activity with D-tagatose. The chain is D-psicose 3-epimerase from Ruminiclostridium cellulolyticum (strain ATCC 35319 / DSM 5812 / JCM 6584 / H10) (Clostridium cellulolyticum).